Consider the following 98-residue polypeptide: Mu-type opioid receptor (98 aa).

Residues tyrosine 1–asparagine 9 are Cytoplasmic-facing. The chain crosses the membrane as a helical span at residues isoleucine 10–leucine 34. Residues methionine 35–cysteine 45 are Extracellular-facing. Residues lysine 46–valine 68 form a helical membrane-spanning segment. The Cytoplasmic segment spans residues aspartate 69–asparagine 88. Tyrosine 71 carries the phosphotyrosine modification. Residues alanine 89 to isoleucine 98 traverse the membrane as a helical segment.

The protein belongs to the G-protein coupled receptor 1 family. In terms of assembly, forms homooligomers and heterooligomers with other GPCRs, such as OPRD1, OPRK1, OPRL1, NPFFR2, ADRA2A, SSTR2, CNR1 and CCR5 (probably in dimeric forms). Interacts with heterotrimeric G proteins; interaction with a heterotrimeric complex containing GNAI1, GNB1 and GNG2 stabilizes the active conformation of the receptor and increases its affinity for endomorphin-2, the synthetic opioid peptide DAMGO and for morphinan agonists. Interacts with PPL; the interaction disrupts agonist-mediated G-protein activation. Interacts (via C-terminus) with DNAJB4 (via C-terminus). Interacts with calmodulin; the interaction inhibits the constitutive activity of OPRM1; it abolishes basal and attenuates agonist-stimulated G-protein coupling. Interacts with FLNA, PLD2, RANBP9 and WLS and GPM6A. Interacts with RTP4. Interacts with SYP and GNAS. Interacts with RGS9, RGS17, RGS20, RGS4, PPP1R9B and HINT1. Phosphorylated. Differentially phosphorylated in basal and agonist-induced conditions. Agonist-mediated phosphorylation modulates receptor internalization. Phosphorylated by GRK2 in a agonist-dependent manner. Phosphorylated on tyrosine residues; the phosphorylation is involved in agonist-induced G-protein-independent receptor down-regulation. In terms of processing, phosphorylated. Differentially phosphorylated in basal and agonist-induced conditions. Agonist-mediated phosphorylation modulates receptor internalization. Phosphorylated by GRK2 in a agonist-dependent manner. Phosphorylated on tyrosine residues; the phosphorylation is involved in agonist-induced G-protein-independent receptor down-regulation. Post-translationally, ubiquitinated. A basal ubiquitination seems not to be related to degradation. Ubiquitination is increased upon formation of OPRM1:OPRD1 oligomers leading to proteasomal degradation; the ubiquitination is diminished by RTP4.

Its subcellular location is the cell membrane. The protein localises to the cell projection. It is found in the axon. It localises to the perikaryon. The protein resides in the dendrite. Its subcellular location is the endosome. Functionally, receptor for endogenous opioids such as beta-endorphin and endomorphin. Receptor for natural and synthetic opioids including morphine, heroin, DAMGO, fentanyl, etorphine, buprenorphin and methadone. Also activated by enkephalin peptides, such as Met-enkephalin or Met-enkephalin-Arg-Phe, with higher affinity for Met-enkephalin-Arg-Phe. Agonist binding to the receptor induces coupling to an inactive GDP-bound heterotrimeric G-protein complex and subsequent exchange of GDP for GTP in the G-protein alpha subunit leading to dissociation of the G-protein complex with the free GTP-bound G-protein alpha and the G-protein beta-gamma dimer activating downstream cellular effectors. The agonist- and cell type-specific activity is predominantly coupled to pertussis toxin-sensitive G(i) and G(o) G alpha proteins, GNAI1, GNAI2, GNAI3 and GNAO1, and to a lesser extent to pertussis toxin-insensitive G alpha proteins GNAZ and GNA15. They mediate an array of downstream cellular responses, including inhibition of adenylate cyclase activity and both N-type and L-type calcium channels, activation of inward rectifying potassium channels, mitogen-activated protein kinase (MAPK), phospholipase C (PLC), phosphoinositide/protein kinase (PKC), phosphoinositide 3-kinase (PI3K) and regulation of NF-kappa-B. Also couples to adenylate cyclase stimulatory G alpha proteins. The selective temporal coupling to G-proteins and subsequent signaling can be regulated by RGSZ proteins, such as RGS9, RGS17 and RGS4. Phosphorylation by members of the GPRK subfamily of Ser/Thr protein kinases and association with beta-arrestins is involved in short-term receptor desensitization. Beta-arrestins associate with the GPRK-phosphorylated receptor and uncouple it from the G-protein thus terminating signal transduction. The phosphorylated receptor is internalized through endocytosis via clathrin-coated pits which involves beta-arrestins. The activation of the ERK pathway occurs either in a G-protein-dependent or a beta-arrestin-dependent manner and is regulated by agonist-specific receptor phosphorylation. Acts as a class A G-protein coupled receptor (GPCR) which dissociates from beta-arrestin at or near the plasma membrane and undergoes rapid recycling. Receptor down-regulation pathways are varying with the agonist and occur dependent or independent of G-protein coupling. Endogenous ligands induce rapid desensitization, endocytosis and recycling. Heterooligomerization with other GPCRs can modulate agonist binding, signaling and trafficking properties. Involved in neurogenesis. This Cavia porcellus (Guinea pig) protein is Mu-type opioid receptor (OPRM1).